The following is a 460-amino-acid chain: V-type ATP synthase beta chain (460 aa).

This sequence belongs to the ATPase alpha/beta chains family.

Produces ATP from ADP in the presence of a proton gradient across the membrane. The V-type beta chain is a regulatory subunit. The chain is V-type ATP synthase beta chain from Clostridium perfringens (strain ATCC 13124 / DSM 756 / JCM 1290 / NCIMB 6125 / NCTC 8237 / Type A).